The following is a 219-amino-acid chain: Response regulator ArlR (219 aa).

Residues 3 to 116 form the Response regulatory domain; the sequence is NILIVEDEQN…ELFARIRAVL (114 aa). Asp52 bears the 4-aspartylphosphate mark. A DNA-binding region (ompR/PhoB-type) is located at residues 122-219; the sequence is KDIIDINGIK…TVRGVGYVIR (98 aa).

In terms of processing, phosphorylated by ArlS.

Its subcellular location is the cytoplasm. Member of the two-component regulatory system ArlS/ArlR. This chain is Response regulator ArlR (arlR), found in Staphylococcus haemolyticus (strain JCSC1435).